A 237-amino-acid polypeptide reads, in one-letter code: tRNA-splicing endonuclease subunit Sen2-1 (237 aa).

Residues Y148, H156, and K190 contribute to the active site.

This sequence belongs to the tRNA-intron endonuclease family. As to quaternary structure, tRNA splicing endonuclease is a heterotetramer composed of SEN2, SEN15, SEN34/LENG5 and SEN54.

The protein localises to the nucleus. It carries out the reaction pretRNA = a 3'-half-tRNA molecule with a 5'-OH end + a 5'-half-tRNA molecule with a 2',3'-cyclic phosphate end + an intron with a 2',3'-cyclic phosphate and a 5'-hydroxyl terminus.. Constitutes one of the two catalytic subunit of the tRNA-splicing endonuclease complex, a complex responsible for identification and cleavage of the splice sites in pre-tRNA. It cleaves pre-tRNA at the 5'- and 3'-splice sites to release the intron. The products are an intron and two tRNA half-molecules bearing 2',3'-cyclic phosphate and 5'-OH termini. There are no conserved sequences at the splice sites, but the intron is invariably located at the same site in the gene, placing the splice sites an invariant distance from the constant structural features of the tRNA body. Probably carries the active site for 5'-splice site cleavage. The polypeptide is tRNA-splicing endonuclease subunit Sen2-1 (SEN1) (Arabidopsis thaliana (Mouse-ear cress)).